The following is a 221-amino-acid chain: 7-cyano-7-deazaguanine synthase (221 aa).

10–20 (FSGGQDSTTCL) is a binding site for ATP. Residues Cys186, Cys195, Cys198, and Cys201 each contribute to the Zn(2+) site.

Belongs to the QueC family. In terms of assembly, homodimer. It depends on Zn(2+) as a cofactor.

The catalysed reaction is 7-carboxy-7-deazaguanine + NH4(+) + ATP = 7-cyano-7-deazaguanine + ADP + phosphate + H2O + H(+). The protein operates within purine metabolism; 7-cyano-7-deazaguanine biosynthesis. In terms of biological role, catalyzes the ATP-dependent conversion of 7-carboxy-7-deazaguanine (CDG) to 7-cyano-7-deazaguanine (preQ(0)). The polypeptide is 7-cyano-7-deazaguanine synthase (Anoxybacillus flavithermus (strain DSM 21510 / WK1)).